A 340-amino-acid chain; its full sequence is DNA-directed RNA polymerase subunit alpha (340 aa).

An alpha N-terminal domain (alpha-NTD) region spans residues 1–233 (MIRDEISVST…DLFIPFLRAE (233 aa)). An alpha C-terminal domain (alpha-CTD) region spans residues 268 to 340 (AFKHIFIDQS…DLPKNKFQIH (73 aa)).

It belongs to the RNA polymerase alpha chain family. In terms of assembly, in plastids the minimal PEP RNA polymerase catalytic core is composed of four subunits: alpha, beta, beta', and beta''. When a (nuclear-encoded) sigma factor is associated with the core the holoenzyme is formed, which can initiate transcription.

The protein resides in the plastid. Its subcellular location is the chloroplast. The enzyme catalyses RNA(n) + a ribonucleoside 5'-triphosphate = RNA(n+1) + diphosphate. DNA-dependent RNA polymerase catalyzes the transcription of DNA into RNA using the four ribonucleoside triphosphates as substrates. In Cycas taitungensis (Prince sago), this protein is DNA-directed RNA polymerase subunit alpha.